Consider the following 250-residue polypeptide: MLMRQKGIIIKAVDYGESDKIITILNEHGAKVPLMARRAKKVKTGLQAQTQLFVYGLFIYNQWRGMGTLNSVDVISQHYKLQMDLYVSSYAALAAETIERSMDEGDIAPYNYQLLQFVLEKIESGTSAQLMSVVVMLKCMKRFGFTASFNRCAVSGNDTQADLIGYSFKFDGAISRQEASKDVHAVILSNKTLYLLDVLQKLPIDKMNSLNIHQEIIDEMSDIILMLYREYAGMFFKSQKLINQLKRLEQ.

Belongs to the RecO family.

In terms of biological role, involved in DNA repair and RecF pathway recombination. In Staphylococcus aureus (strain COL), this protein is DNA repair protein RecO.